We begin with the raw amino-acid sequence, 361 residues long: Zygote arrest protein 1 (361 aa).

3 disordered regions span residues 1–23, 98–128, and 148–252; these read MFPA…AGDG, QPAG…PRSW, and VAGG…EQDK. Thr-154 is subject to Phosphothreonine; by CDK1. Ser-161 is subject to Phosphoserine; by CDK1. A compositionally biased stretch (basic and acidic residues) spans 168-177; the sequence is REPEPREVAA. The segment at 263–346 adopts a 3CxxC-type zinc-finger fold; it reads KYGYYHCKDC…RQDLCGRCKD (84 aa).

Belongs to the ZAR1 family. Interacts with YBX2. Phosphorylation by CDK1 does not regulate formation of MARDO (mitochondria-associated ribonucleoprotein domain) membraneless compartment. Post-translationally, ubiquitinated and degradaded by the proteasome during oocyte meiotic maturation, leading to MARDO (mitochondria-associated ribonucleoprotein domain) membraneless compartment dissolution. As to expression, ovary. Expressed in primary oocytes (from primary through antral follicle stages) and during the progression from Meiosis I to Meiosis II. The mRNA is detected in growing oocytes (early primary follicle, type 3a) through fully grown oocytes (antral follicle, type 8).

Its subcellular location is the cytoplasm. The protein resides in the cytoplasmic ribonucleoprotein granule. MRNA-binding protein that mediates formation of MARDO (mitochondria-associated ribonucleoprotein domain), a membraneless compartment that stores maternal mRNAs in oocytes. MARDO assembly around mitochondria is directed by an increase in mitochondrial membrane potential during oocyte growth. Promotes formation of MARDO phase-separated membraneless compartment by undergoing liquid-liquid phase separation upon binding to maternal mRNAs. Binds to the 3'-UTR of maternal mRNAs. Maternal mRNAs stored in the MARDO are translationally repressed. Essential for female fertility and oocyte-to-embryo transition by coordinating maternal mRNA storage, translation and degradation. This chain is Zygote arrest protein 1, found in Mus musculus (Mouse).